Reading from the N-terminus, the 386-residue chain is Transcription factor GTE1 (386 aa).

Disordered regions lie at residues 66–106 (GAAQ…KHVS) and 340–386 (ANKS…AKKA). Residues 68–78 (AQTNTSKSNSG) are compositionally biased toward polar residues. Residues 105–211 (VSSPDLMRQF…EKFEEKWLLI (107 aa)) form the Bromo domain. The 82-residue stretch at 263–344 (RESVVQRCRK…EALKAANKSS (82 aa)) folds into the NET domain. Positions 345–358 (GGTNAQNNNNTGTG) are enriched in low complexity.

As to expression, barely detectable in stems, leaves, siliques, and dry seeds, but was present at considerable levels in roots, flowers and imbibited seeds.

It is found in the nucleus. Functionally, transcription activator that plays a role in the promotion of seed germination by both negatively and positively regulating the abscisic acid (ABA) and phytochrome A (phyA) transduction pathways, respectively. This Arabidopsis thaliana (Mouse-ear cress) protein is Transcription factor GTE1 (GTE1).